Consider the following 87-residue polypeptide: MANTAQARKRARQSVQRNKHNSSLRSMLRTAIKRVRQSIATGDKAAAGETLRKATSVIDSVADKNIIHKNKAARHKSRLAAAVKALA.

The disordered stretch occupies residues 1–25 (MANTAQARKRARQSVQRNKHNSSLR). The span at 7-22 (ARKRARQSVQRNKHNS) shows a compositional bias: basic residues.

This sequence belongs to the bacterial ribosomal protein bS20 family.

In terms of biological role, binds directly to 16S ribosomal RNA. The polypeptide is Small ribosomal subunit protein bS20 (Bordetella bronchiseptica (strain ATCC BAA-588 / NCTC 13252 / RB50) (Alcaligenes bronchisepticus)).